The following is a 458-amino-acid chain: ATP synthase subunit beta 2 (458 aa).

Residue 148 to 155 participates in ATP binding; the sequence is GGAGVGKT.

The protein belongs to the ATPase alpha/beta chains family. As to quaternary structure, F-type ATPases have 2 components, CF(1) - the catalytic core - and CF(0) - the membrane proton channel. CF(1) has five subunits: alpha(3), beta(3), gamma(1), delta(1), epsilon(1). CF(0) has three main subunits: a(1), b(2) and c(9-12). The alpha and beta chains form an alternating ring which encloses part of the gamma chain. CF(1) is attached to CF(0) by a central stalk formed by the gamma and epsilon chains, while a peripheral stalk is formed by the delta and b chains.

The protein resides in the cell inner membrane. The catalysed reaction is ATP + H2O + 4 H(+)(in) = ADP + phosphate + 5 H(+)(out). Functionally, produces ATP from ADP in the presence of a proton gradient across the membrane. The catalytic sites are hosted primarily by the beta subunits. This chain is ATP synthase subunit beta 2, found in Marinomonas sp. (strain MWYL1).